The primary structure comprises 103 residues: Acyl-CoA-binding protein (103 aa).

The ACB domain maps to 18-103; it reads HQADFDEAAE…AKTMVEKYGI (86 aa). Residues K30, 45 to 49, K67, K71, and Y90 contribute to the an acyl-CoA site; that span reads YGFYK.

The protein belongs to the ACBP family. As to quaternary structure, monomer.

It localises to the endoplasmic reticulum. It is found in the golgi apparatus. Binds medium- and long-chain acyl-CoA esters with very high affinity and may function as an intracellular carrier of acyl-CoA esters. It is also able to displace diazepam from the benzodiazepine (BZD) recognition site located on the GABA type A receptor. It is therefore possible that this protein also acts as a neuropeptide to modulate the action of the GABA receptor. This is Acyl-CoA-binding protein (DBI) from Anas platyrhynchos (Mallard).